A 167-amino-acid chain; its full sequence is Ubiquitin-conjugating enzyme E2 15 (167 aa).

The UBC core domain maps to 5-165 (ASEQLLRKQL…VRRLVRRSIE (161 aa)). The Glycyl thioester intermediate role is filled by Cys90.

It belongs to the ubiquitin-conjugating enzyme family.

The catalysed reaction is S-ubiquitinyl-[E1 ubiquitin-activating enzyme]-L-cysteine + [E2 ubiquitin-conjugating enzyme]-L-cysteine = [E1 ubiquitin-activating enzyme]-L-cysteine + S-ubiquitinyl-[E2 ubiquitin-conjugating enzyme]-L-cysteine.. The protein operates within protein modification; protein ubiquitination. In terms of biological role, catalyzes the covalent attachment of ubiquitin to other proteins. Has a role in the formation of chromatin structures that influence the localization of transcriptional silencing factors. This chain is Ubiquitin-conjugating enzyme E2 15 (ubc15), found in Schizosaccharomyces pombe (strain 972 / ATCC 24843) (Fission yeast).